Here is a 579-residue protein sequence, read N- to C-terminus: Putative ABC transporter ATP-binding protein VPA1482 (579 aa).

ABC transporter domains lie at 3-244 (IEFS…GIRE) and 299-533 (LEVR…ANLT). ATP contacts are provided by residues 37-44 (GPSGSGKS) and 332-339 (GKNGSGKS).

Belongs to the ABC transporter superfamily.

The protein resides in the cell inner membrane. Probably part of an ABC transporter complex. Responsible for energy coupling to the transport system. In Vibrio parahaemolyticus serotype O3:K6 (strain RIMD 2210633), this protein is Putative ABC transporter ATP-binding protein VPA1482.